The sequence spans 1354 residues: Eukaryotic translation initiation factor 3 subunit A (1354 aa).

Lys68 is modified (N6-acetyllysine). The stretch at 82 to 120 (NIKSLEDVVRAYLKLAEEKTEAAKEESQQMVLDIEDLDN) forms a coiled coil. The region spanning 315–498 (MQRMSTRVLL…RTLSFGSDLN (184 aa)) is the PCI domain. Phosphoserine is present on residues Ser492 and Ser584. Positions 664-835 (LDPDFIMAKQ…REERERAERA (172 aa)) are interaction with EIF3B. Disordered regions lie at residues 809–844 (EKEE…LREY), 866–1249 (EERE…RDRD), and 1262–1354 (DLRD…TVRR). Basic and acidic residues-rich tracts occupy residues 866–1136 (EERE…DDAR), 1148–1249 (GWRE…RDRD), 1262–1302 (DLRD…DPPR), and 1310–1343 (SRER…TKNE). A Phosphoserine modification is found at Ser895. The 1; truncated repeat unit spans residues 924-931 (DDERPHRR). Residues 924–1143 (DDERPHRRDE…DARPGPWRPF (220 aa)) are 22 X 10 AA approximate tandem repeats of [DA]-[DE]-[ED]-R-[PLIGFSV]-[RPS]-[RW]-[RL]-[GNIHT]-[DGLPTAM]. Repeat 2 spans residues 932–941 (DEDRLRRLGG). The stretch at 942–951 (DDEERESSLR) is one 3; approximate repeat. A Phosphoserine modification is found at Ser949. Tandem repeats lie at residues 953 to 962 (DDDRIPRRGL), 963 to 972 (DDDRGPRRGP), 973 to 982 (DEDRFSRRGT), 983 to 992 (DDDRPSWRNA), 993 to 1002 (DDDRPPRRIG), 1003 to 1012 (DDDRGSWRHT), 1013 to 1022 (DDDRPPRRGL), 1023 to 1032 (DDDRPPRRGL), 1033 to 1042 (DDERGSWRTA), 1043 to 1052 (EEDRGPRRGM), 1053 to 1062 (DDDRGPRRGG), 1064 to 1073 (DDERSSWRNA), 1074 to 1083 (DDDRGPRRGM), 1084 to 1093 (DDDRGPRRGL), 1094 to 1103 (DDDRGPWRNA), 1104 to 1113 (AEDRISRRGA), 1114 to 1123 (DDDRGPWRNM), and 1124 to 1133 (DDDRVPRRGD). Ser1038 carries the phosphoserine modification. One copy of the 22; approximate repeat lies at 1134 to 1143 (DARPGPWRPF). Phosphoserine occurs at positions 1159 and 1233. Residues Ser1310 and Ser1336 each carry the phosphoserine modification.

The protein belongs to the eIF-3 subunit A family. Component of the eukaryotic translation initiation factor 3 (eIF-3) complex, which is composed of 13 subunits: EIF3A, EIF3B, EIF3C, EIF3D, EIF3E, EIF3F, EIF3G, EIF3H, EIF3I, EIF3J, EIF3K, EIF3L and EIF3M. The eIF-3 complex appears to include 3 stable modules: module A is composed of EIF3A, EIF3B, EIF3G and EIF3I; module B is composed of EIF3F, EIF3H, and EIF3M; and module C is composed of EIF3C, EIF3D, EIF3E, EIF3L and EIF3K. EIF3C of module C binds EIF3B of module A and EIF3H of module B, thereby linking the three modules. EIF3J is a labile subunit that binds to the eIF-3 complex via EIF3B. The eIF-3 complex interacts with RPS6KB1 under conditions of nutrient depletion. Mitogenic stimulation leads to binding and activation of a complex composed of MTOR and RPTOR, leading to phosphorylation and release of RPS6KB1 and binding of EIF4B to eIF-3. Interacts with EIF4G1. Also interacts with KRT7 and PIWIL2. Phosphorylated. Phosphorylation is enhanced upon serum stimulation.

It is found in the cytoplasm. Functionally, RNA-binding component of the eukaryotic translation initiation factor 3 (eIF-3) complex, which is required for several steps in the initiation of protein synthesis. The eIF-3 complex associates with the 40S ribosome and facilitates the recruitment of eIF-1, eIF-1A, eIF-2:GTP:methionyl-tRNAi and eIF-5 to form the 43S pre-initiation complex (43S PIC). The eIF-3 complex stimulates mRNA recruitment to the 43S PIC and scanning of the mRNA for AUG recognition. The eIF-3 complex is also required for disassembly and recycling of post-termination ribosomal complexes and subsequently prevents premature joining of the 40S and 60S ribosomal subunits prior to initiation. The eIF-3 complex specifically targets and initiates translation of a subset of mRNAs involved in cell proliferation, including cell cycling, differentiation and apoptosis, and uses different modes of RNA stem-loop binding to exert either translational activation or repression. In Rattus norvegicus (Rat), this protein is Eukaryotic translation initiation factor 3 subunit A (Eif3a).